The sequence spans 70 residues: Small ribosomal subunit protein bS21 (70 aa).

The protein belongs to the bacterial ribosomal protein bS21 family.

The sequence is that of Small ribosomal subunit protein bS21 from Albidiferax ferrireducens (strain ATCC BAA-621 / DSM 15236 / T118) (Rhodoferax ferrireducens).